A 483-amino-acid chain; its full sequence is Altronate oxidoreductase (483 aa).

18–29 lines the NAD(+) pocket; the sequence is IIQFGEGNFLRA.

This sequence belongs to the mannitol dehydrogenase family. UxaB subfamily.

It carries out the reaction D-altronate + NAD(+) = keto-D-tagaturonate + NADH + H(+). The protein operates within carbohydrate metabolism; pentose and glucuronate interconversion. In Escherichia coli O157:H7, this protein is Altronate oxidoreductase (uxaB).